We begin with the raw amino-acid sequence, 333 residues long: Beta-ketoacyl-[acyl-carrier-protein] synthase III (333 aa).

Catalysis depends on residues C117 and H257. Residues 258–262 (QANLR) form an ACP-binding region. The active site involves N287.

This sequence belongs to the thiolase-like superfamily. FabH family. In terms of assembly, homodimer.

The protein resides in the cytoplasm. It catalyses the reaction malonyl-[ACP] + acetyl-CoA + H(+) = 3-oxobutanoyl-[ACP] + CO2 + CoA. Its pathway is lipid metabolism; fatty acid biosynthesis. Catalyzes the condensation reaction of fatty acid synthesis by the addition to an acyl acceptor of two carbons from malonyl-ACP. Catalyzes the first condensation reaction which initiates fatty acid synthesis and may therefore play a role in governing the total rate of fatty acid production. Possesses both acetoacetyl-ACP synthase and acetyl transacylase activities. Its substrate specificity determines the biosynthesis of branched-chain and/or straight-chain of fatty acids. The protein is Beta-ketoacyl-[acyl-carrier-protein] synthase III of Azobacteroides pseudotrichonymphae genomovar. CFP2.